Here is a 63-residue protein sequence, read N- to C-terminus: Protein sigN172 (63 aa).

In Dictyostelium discoideum (Social amoeba), this protein is Protein sigN172.